A 234-amino-acid chain; its full sequence is Sugar fermentation stimulation protein A (234 aa).

A DNA-binding region (H-T-H motif) is located at residues 201–220; that stretch reads LLSEAQQRGVEILAYKAEIS.

Belongs to the SfsA family.

Functionally, binds to DNA non-specifically. Could be a regulatory factor involved in maltose metabolism. This is Sugar fermentation stimulation protein A from Shigella boydii serotype 4 (strain Sb227).